Reading from the N-terminus, the 233-residue chain is Biosynthetic peptidoglycan transglycosylase (233 aa).

A helical transmembrane segment spans residues 7 to 27 (VFTWLAKLVLGLFFASILSVV).

This sequence belongs to the glycosyltransferase 51 family.

The protein resides in the cell inner membrane. It carries out the reaction [GlcNAc-(1-&gt;4)-Mur2Ac(oyl-L-Ala-gamma-D-Glu-L-Lys-D-Ala-D-Ala)](n)-di-trans,octa-cis-undecaprenyl diphosphate + beta-D-GlcNAc-(1-&gt;4)-Mur2Ac(oyl-L-Ala-gamma-D-Glu-L-Lys-D-Ala-D-Ala)-di-trans,octa-cis-undecaprenyl diphosphate = [GlcNAc-(1-&gt;4)-Mur2Ac(oyl-L-Ala-gamma-D-Glu-L-Lys-D-Ala-D-Ala)](n+1)-di-trans,octa-cis-undecaprenyl diphosphate + di-trans,octa-cis-undecaprenyl diphosphate + H(+). The protein operates within cell wall biogenesis; peptidoglycan biosynthesis. Peptidoglycan polymerase that catalyzes glycan chain elongation from lipid-linked precursors. This Shewanella oneidensis (strain ATCC 700550 / JCM 31522 / CIP 106686 / LMG 19005 / NCIMB 14063 / MR-1) protein is Biosynthetic peptidoglycan transglycosylase.